Consider the following 305-residue polypeptide: UDP-3-O-acyl-N-acetylglucosamine deacetylase (305 aa).

Zn(2+)-binding residues include His79, His238, and Asp242. The Proton donor role is filled by His265.

It belongs to the LpxC family. It depends on Zn(2+) as a cofactor.

It catalyses the reaction a UDP-3-O-[(3R)-3-hydroxyacyl]-N-acetyl-alpha-D-glucosamine + H2O = a UDP-3-O-[(3R)-3-hydroxyacyl]-alpha-D-glucosamine + acetate. It functions in the pathway glycolipid biosynthesis; lipid IV(A) biosynthesis; lipid IV(A) from (3R)-3-hydroxytetradecanoyl-[acyl-carrier-protein] and UDP-N-acetyl-alpha-D-glucosamine: step 2/6. In terms of biological role, catalyzes the hydrolysis of UDP-3-O-myristoyl-N-acetylglucosamine to form UDP-3-O-myristoylglucosamine and acetate, the committed step in lipid A biosynthesis. The protein is UDP-3-O-acyl-N-acetylglucosamine deacetylase of Klebsiella pneumoniae subsp. pneumoniae (strain ATCC 700721 / MGH 78578).